We begin with the raw amino-acid sequence, 405 residues long: Tyrosine--tRNA ligase (405 aa).

Position 35 (Y35) interacts with L-tyrosine. The 'HIGH' region signature appears at 40–49; that stretch reads ATSSSLHIGH. Y166 and Q170 together coordinate L-tyrosine. The 'KMSKS' region signature appears at 226 to 230; sequence KMGKS. K229 provides a ligand contact to ATP. In terms of domain architecture, S4 RNA-binding spans 340–405; that stretch reads ILLVDLMLDS…GKKKFLRIVI (66 aa).

The protein belongs to the class-I aminoacyl-tRNA synthetase family. TyrS type 1 subfamily. As to quaternary structure, homodimer.

It localises to the cytoplasm. The catalysed reaction is tRNA(Tyr) + L-tyrosine + ATP = L-tyrosyl-tRNA(Tyr) + AMP + diphosphate + H(+). In terms of biological role, catalyzes the attachment of tyrosine to tRNA(Tyr) in a two-step reaction: tyrosine is first activated by ATP to form Tyr-AMP and then transferred to the acceptor end of tRNA(Tyr). This chain is Tyrosine--tRNA ligase, found in Borreliella burgdorferi (strain ATCC 35210 / DSM 4680 / CIP 102532 / B31) (Borrelia burgdorferi).